A 699-amino-acid polypeptide reads, in one-letter code: Elongation factor G (699 aa).

One can recognise a tr-type G domain in the interval 8–283 (EHIRNIGICA…AVVDFLPSPI (276 aa)). Residues 17–24 (AHIDAGKT), 81–85 (DTPGH), and 135–138 (NKMD) contribute to the GTP site.

The protein belongs to the TRAFAC class translation factor GTPase superfamily. Classic translation factor GTPase family. EF-G/EF-2 subfamily.

The protein localises to the cytoplasm. Functionally, catalyzes the GTP-dependent ribosomal translocation step during translation elongation. During this step, the ribosome changes from the pre-translocational (PRE) to the post-translocational (POST) state as the newly formed A-site-bound peptidyl-tRNA and P-site-bound deacylated tRNA move to the P and E sites, respectively. Catalyzes the coordinated movement of the two tRNA molecules, the mRNA and conformational changes in the ribosome. In Rickettsia felis (strain ATCC VR-1525 / URRWXCal2) (Rickettsia azadi), this protein is Elongation factor G.